The chain runs to 217 residues: Adenylate kinase (217 aa).

10 to 15 (GAGKGT) contributes to the ATP binding site. An NMP region spans residues 30–59 (STGDMLRAQIKAGTELGMKAKAIMDAGGLV). AMP is bound by residues threonine 31, arginine 36, 57–59 (GLV), 85–88 (GFPR), and glutamine 92. Positions 122–159 (GRRVHVASGRTYHVVFNPPKVAGKDDVTGEDLIQRDDD) are LID. Residues arginine 123 and 132 to 133 (TY) contribute to the ATP site. The AMP site is built by arginine 156 and arginine 167. Glycine 203 is a binding site for ATP.

The protein belongs to the adenylate kinase family. Monomer.

It localises to the cytoplasm. It carries out the reaction AMP + ATP = 2 ADP. It participates in purine metabolism; AMP biosynthesis via salvage pathway; AMP from ADP: step 1/1. Functionally, catalyzes the reversible transfer of the terminal phosphate group between ATP and AMP. Plays an important role in cellular energy homeostasis and in adenine nucleotide metabolism. The chain is Adenylate kinase from Thiobacillus denitrificans (strain ATCC 25259 / T1).